We begin with the raw amino-acid sequence, 417 residues long: Phosphoglycerate kinase 1 (417 aa).

Serine 2 is modified (N-acetylserine). Phosphoserine is present on residues serine 2 and serine 4. Lysine 6 is modified (N6-succinyllysine). The residue at position 11 (lysine 11) is an N6-acetyllysine. (2R)-3-phosphoglycerate is bound by residues valine 23, aspartate 24, phenylalanine 25, asparagine 26, glutamine 38, and arginine 39. The interval glutamine 38–alanine 43 is mitochondrial targeting region exposed following cis-trans isomerization by PIN1 and recognized by the TOM complex for mitochondrial translocation of the protein. An N6-acetyllysine; alternate modification is found at lysine 48. Lysine 48 is subject to N6-succinyllysine; alternate. The (2R)-3-phosphoglycerate site is built by serine 62, histidine 63, glycine 65, and arginine 66. Lysine 75 carries the N6-acetyllysine modification. Residue tyrosine 76 is modified to Phosphotyrosine. Residues lysine 86 and lysine 91 each carry the N6-acetyllysine modification. Lysine 97 bears the N6-acetyllysine; alternate mark. Lysine 97 bears the N6-(2-hydroxyisobutyryl)lysine; alternate mark. (2R)-3-phosphoglycerate contacts are provided by leucine 122 and arginine 123. The residue at position 131 (lysine 131) is an N6-acetyllysine; alternate. Lysine 131 bears the N6-malonyllysine; alternate mark. An N6-acetyllysine modification is found at lysine 146. 2 residues coordinate (2R)-3-phosphoglycerate: histidine 170 and arginine 171. Lysine 191 carries the N6-succinyllysine modification. Residue tyrosine 196 is modified to Phosphotyrosine. Lysine 199 is subject to N6-acetyllysine. The residue at position 203 (serine 203) is a Phosphoserine. ADP is bound at residue glycine 214. Glycine 214 is a CDP binding site. Residues alanine 215 and lysine 216 each contribute to the AMP site. An ATP-binding site is contributed by alanine 215. Alanine 215 serves as a coordination point for Mg(2+). Lysine 216 is subject to N6-(2-hydroxyisobutyryl)lysine. Alanine 218 and aspartate 219 together coordinate Mg(2+). A CDP-binding site is contributed by aspartate 219. Lysine 220 serves as a coordination point for AMP. Position 220 (lysine 220) interacts with ATP. Lysine 220 is subject to N6-(2-hydroxyisobutyryl)lysine. Glycine 238 serves as a coordination point for ADP. Glycine 238 contacts CDP. Glycine 239 contacts AMP. Position 239 (glycine 239) interacts with ATP. N6-acetyllysine occurs at positions 267 and 291. Glycine 313 provides a ligand contact to AMP. Glycine 313 serves as a coordination point for ATP. At lysine 323 the chain carries N6-(2-hydroxyisobutyryl)lysine. CDP is bound by residues glycine 338, valine 340, and phenylalanine 343. An ADP-binding site is contributed by phenylalanine 343. Glutamate 344 is a binding site for AMP. Glutamate 344 lines the ATP pocket. Lysine 361 is modified (N6-acetyllysine). 2 residues coordinate ATP: aspartate 375 and threonine 376. Aspartate 375 is a binding site for Mg(2+).

It belongs to the phosphoglycerate kinase family. Monomer. Interacts with kinase MAPK1/ERK2; the interaction is direct, occurs under hypoxic conditions, and promotes its interaction with PIN1. Interacts with peptidyl-prolyl cis-trans isomerase PIN1; the interaction is direct, occurs under hypoxic conditions, and targets the protein to the mitochondrion by promoting interactions with the TOM complex. Interacts with mitochondrial circRNA mcPGK1 (via its 2nd stem-loop); the interaction is direct and targets the protein to the mitochondrion by promoting interactions with the TOM complex. Interacts with pyruvate dehydrogenase kinase PDK1; the interaction is direct, occurs under hypoxic conditions and leads to PDK1-mediated inhibition of pyruvate dehydrogenase complex activity. Requires Mg(2+) as cofactor. Post-translationally, phosphorylated at Ser-203 by MAPK1/ERK2 under hypoxic conditions, which promotes its mitochondrial targeting.

The protein resides in the cytoplasm. It localises to the cytosol. It is found in the mitochondrion matrix. It carries out the reaction (2R)-3-phosphoglycerate + ATP = (2R)-3-phospho-glyceroyl phosphate + ADP. It catalyses the reaction L-seryl-[protein] + ATP = O-phospho-L-seryl-[protein] + ADP + H(+). The protein operates within carbohydrate degradation; glycolysis; pyruvate from D-glyceraldehyde 3-phosphate: step 2/5. Its function is as follows. Catalyzes one of the two ATP producing reactions in the glycolytic pathway via the reversible conversion of 1,3-diphosphoglycerate to 3-phosphoglycerate. Both L- and D- forms of purine and pyrimidine nucleotides can be used as substrates, but the activity is much lower on pyrimidines. In addition to its role as a glycolytic enzyme, it seems that PGK-1 acts as a polymerase alpha cofactor protein (primer recognition protein). Acts as a protein kinase when localized to the mitochondrion where it phosphorylates pyruvate dehydrogenase kinase PDK1 to inhibit pyruvate dehydrogenase complex activity and suppress the formation of acetyl-coenzyme A from pyruvate, and consequently inhibit oxidative phosphorylation and promote glycolysis. May play a role in sperm motility. This chain is Phosphoglycerate kinase 1 (PGK1), found in Sus scrofa (Pig).